A 338-amino-acid chain; its full sequence is RNA 3'-terminal phosphate cyclase (338 aa).

ATP-binding positions include Gln103 and 283–287 (YLADQ). His308 functions as the Tele-AMP-histidine intermediate in the catalytic mechanism.

Belongs to the RNA 3'-terminal cyclase family. Type 1 subfamily.

It localises to the cytoplasm. It catalyses the reaction a 3'-end 3'-phospho-ribonucleotide-RNA + ATP = a 3'-end 2',3'-cyclophospho-ribonucleotide-RNA + AMP + diphosphate. Its function is as follows. Catalyzes the conversion of 3'-phosphate to a 2',3'-cyclic phosphodiester at the end of RNA. The mechanism of action of the enzyme occurs in 3 steps: (A) adenylation of the enzyme by ATP; (B) transfer of adenylate to an RNA-N3'P to produce RNA-N3'PP5'A; (C) and attack of the adjacent 2'-hydroxyl on the 3'-phosphorus in the diester linkage to produce the cyclic end product. The biological role of this enzyme is unknown but it is likely to function in some aspects of cellular RNA processing. This Shigella sonnei (strain Ss046) protein is RNA 3'-terminal phosphate cyclase.